Here is a 115-residue protein sequence, read N- to C-terminus: Large ribosomal subunit protein bL20 (115 aa).

Belongs to the bacterial ribosomal protein bL20 family.

In terms of biological role, binds directly to 23S ribosomal RNA and is necessary for the in vitro assembly process of the 50S ribosomal subunit. It is not involved in the protein synthesizing functions of that subunit. The protein is Large ribosomal subunit protein bL20 of Myxococcus xanthus (strain DK1622).